A 371-amino-acid polypeptide reads, in one-letter code: Ecto-ADP-ribosyltransferase 3 (371 aa).

The first 26 residues, 1-26 (MKMGHFEMVTTLLAAAVLMDIFQVKA), serve as a signal peptide directing secretion. Residues C43 and C255 are joined by a disulfide bond. The TR mART core domain occupies 64–250 (ALLRMVWDNA…LVLQSINSTC (187 aa)). Y101 and N182 together coordinate NAD(+). A disordered region spans residues 306-346 (VLQTEENPLLPDEKPDRSRGKANNPTPGLVPGPKSHPSASS). A lipid anchor (GPI-anchor amidated serine) is attached at S345. Positions 346 to 371 (SGNTLLPSVMASTILLVASAVNFIEL) are cleaved as a propeptide — removed in mature form.

Belongs to the Arg-specific ADP-ribosyltransferase family.

Its subcellular location is the cell membrane. It catalyses the reaction L-arginyl-[protein] + NAD(+) = N(omega)-(ADP-D-ribosyl)-L-arginyl-[protein] + nicotinamide + H(+). This is Ecto-ADP-ribosyltransferase 3 (Art3) from Mus musculus (Mouse).